Consider the following 580-residue polypeptide: 2-succinyl-5-enolpyruvyl-6-hydroxy-3-cyclohexene-1-carboxylate synthase (580 aa).

This sequence belongs to the TPP enzyme family. MenD subfamily. As to quaternary structure, homodimer. Mg(2+) is required as a cofactor. The cofactor is Mn(2+). It depends on thiamine diphosphate as a cofactor.

It carries out the reaction isochorismate + 2-oxoglutarate + H(+) = 5-enolpyruvoyl-6-hydroxy-2-succinyl-cyclohex-3-ene-1-carboxylate + CO2. Its pathway is quinol/quinone metabolism; 1,4-dihydroxy-2-naphthoate biosynthesis; 1,4-dihydroxy-2-naphthoate from chorismate: step 2/7. The protein operates within quinol/quinone metabolism; menaquinone biosynthesis. Catalyzes the thiamine diphosphate-dependent decarboxylation of 2-oxoglutarate and the subsequent addition of the resulting succinic semialdehyde-thiamine pyrophosphate anion to isochorismate to yield 2-succinyl-5-enolpyruvyl-6-hydroxy-3-cyclohexene-1-carboxylate (SEPHCHC). This is 2-succinyl-5-enolpyruvyl-6-hydroxy-3-cyclohexene-1-carboxylate synthase from Bacillus pumilus (strain SAFR-032).